We begin with the raw amino-acid sequence, 418 residues long: Glutamyl-tRNA reductase (418 aa).

Substrate contacts are provided by residues 49 to 52, Ser-109, 114 to 116, and Gln-120; these read TCNR and EPQ. The active-site Nucleophile is the Cys-50. 189-194 lines the NADP(+) pocket; sequence GAGETI.

It belongs to the glutamyl-tRNA reductase family. In terms of assembly, homodimer.

It carries out the reaction (S)-4-amino-5-oxopentanoate + tRNA(Glu) + NADP(+) = L-glutamyl-tRNA(Glu) + NADPH + H(+). It functions in the pathway porphyrin-containing compound metabolism; protoporphyrin-IX biosynthesis; 5-aminolevulinate from L-glutamyl-tRNA(Glu): step 1/2. Its function is as follows. Catalyzes the NADPH-dependent reduction of glutamyl-tRNA(Glu) to glutamate 1-semialdehyde (GSA). The protein is Glutamyl-tRNA reductase of Salmonella heidelberg (strain SL476).